The primary structure comprises 347 residues: Transcription termination/antitermination protein NusA (347 aa).

Residues 112–184 (GEIVAGVIQR…REPLITLSRT (73 aa)) form the S1 motif domain. The KH domain occupies 287–347 (ARAARVVVPD…GVSRGMAHDR (61 aa)). A disordered region spans residues 322-347 (DIRGDAPPPPPGQPEPGVSRGMAHDR).

The protein belongs to the NusA family. Monomer. Binds directly to the core enzyme of the DNA-dependent RNA polymerase and to nascent RNA.

The protein localises to the cytoplasm. Its function is as follows. Participates in both transcription termination and antitermination. This is Transcription termination/antitermination protein NusA from Mycobacterium bovis (strain ATCC BAA-935 / AF2122/97).